We begin with the raw amino-acid sequence, 477 residues long: Glycogen synthase (477 aa).

An ADP-alpha-D-glucose-binding site is contributed by K15.

This sequence belongs to the glycosyltransferase 1 family. Bacterial/plant glycogen synthase subfamily.

The catalysed reaction is [(1-&gt;4)-alpha-D-glucosyl](n) + ADP-alpha-D-glucose = [(1-&gt;4)-alpha-D-glucosyl](n+1) + ADP + H(+). It functions in the pathway glycan biosynthesis; glycogen biosynthesis. Its function is as follows. Synthesizes alpha-1,4-glucan chains using ADP-glucose. The protein is Glycogen synthase of Serratia proteamaculans (strain 568).